The chain runs to 225 residues: Putative O-phosphotransferase MT2714 (225 aa).

30-37 (GGSSAGKT) provides a ligand contact to ATP.

It to S.violaceus chloramphenicol 3-O phosphotransferase.

The polypeptide is Putative O-phosphotransferase MT2714 (Mycobacterium tuberculosis (strain CDC 1551 / Oshkosh)).